We begin with the raw amino-acid sequence, 473 residues long: MMTKVLGMAPVLGPRPPQEQVGPLMVKVEEKEEKGKYLPSLEMFRQRFRQFGYHDTPGPREALSQLRVLCCEWLRPEIHTKEQILELLVLEQFLTILPQELQAWVQEHCPESAEEAVTLLEDLERELDEPGHQVSTPPNEQKPVWEKISSSGTAKESPSSMQPQPLETSHKYESWGPLYIQESGEEQEFAQDPRKVRDCRLSTQHEESADEQKGSEAEGLKGDIISVIIANKPEASLERQCVNLENEKGTKPPLQEAGSKKGRESVPTKPTPGERRYICAECGKAFSNSSNLTKHRRTHTGEKPYVCTKCGKAFSHSSNLTLHYRTHLVDRPYDCKCGKAFGQSSDLLKHQRMHTEEAPYQCKDCGKAFSGKGSLIRHYRIHTGEKPYQCNECGKSFSQHAGLSSHQRLHTGEKPYKCKECGKAFNHSSNFNKHHRIHTGEKPYWCHHCGKTFCSKSNLSKHQRVHTGEGEAP.

A Glycyl lysine isopeptide (Lys-Gly) (interchain with G-Cter in SUMO2) cross-link involves residue Lys27. The SCAN box domain occupies 45–127 (RQRFRQFGYH…TLLEDLEREL (83 aa)). A disordered region spans residues 127–169 (LDEPGHQVSTPPNEQKPVWEKISSSGTAKESPSSMQPQPLETS). A compositionally biased stretch (polar residues) spans 148-167 (ISSSGTAKESPSSMQPQPLE). Residues Lys221 and Lys232 each participate in a glycyl lysine isopeptide (Lys-Gly) (interchain with G-Cter in SUMO2) cross-link. The disordered stretch occupies residues 244–272 (LENEKGTKPPLQEAGSKKGRESVPTKPTP). The segment covering 258–272 (GSKKGRESVPTKPTP) has biased composition (basic and acidic residues). 7 C2H2-type zinc fingers span residues 277–299 (YICAECGKAFSNSSNLTKHRRTH), 305–327 (YVCTKCGKAFSHSSNLTLHYRTH), 333–354 (YDCKCGKAFGQSSDLLKHQRMH), 360–382 (YQCKDCGKAFSGKGSLIRHYRIH), 388–410 (YQCNECGKSFSQHAGLSSHQRLH), 416–438 (YKCKECGKAFNHSSNFNKHHRIH), and 444–466 (YWCHHCGKTFCSKSNLSKHQRVH). Residue Lys349 forms a Glycyl lysine isopeptide (Lys-Gly) (interchain with G-Cter in SUMO2) linkage.

It belongs to the krueppel C2H2-type zinc-finger protein family.

The protein resides in the nucleus. In terms of biological role, strong transcriptional activator. Plays an important role in spermatogenesis; essential for the progression of meiotic prophase I in spermatocytes. The sequence is that of Zinc finger and SCAN domain-containing protein 21 (ZSCAN21) from Homo sapiens (Human).